Consider the following 1347-residue polypeptide: Neurofascin (1347 aa).

The signal sequence occupies residues 1 to 24; it reads MARQPPPPWVHAAFLLCLLSLGGA. The Extracellular segment spans residues 25-1217; it reads IEIPMDPSIQ…NQADIATQGW (1193 aa). 6 Ig-like C2-type domains span residues 41 to 137, 143 to 230, 244 to 332, 337 to 424, 429 to 517, and 521 to 603; these read PTIT…LQVS, PKEN…NPFT, PSFM…ISVR, PYWL…AFVS, PPRM…VRLE, and PTRI…QDLA. Cystine bridges form between Cys-63–Cys-118, Cys-162–Cys-213, Cys-268–Cys-316, and Cys-358–Cys-408. N-linked (GlcNAc...) asparagine glycosylation is present at Asn-305. N-linked (GlcNAc...) asparagine glycans are attached at residues Asn-409 and Asn-446. Cystine bridges form between Cys-452/Cys-501 and Cys-543/Cys-592. Tyr-481 bears the Phosphotyrosine mark. N-linked (GlcNAc...) asparagine glycosylation is present at Asn-483. Ser-485 is modified (phosphoserine). Fibronectin type-III domains lie at 630-725, 730-823, 828-930, and 934-1030; these read RPRD…TSGA, NPGD…SGED, APTE…TPEG, and APRR…PNEA. Positions 713–740 are disordered; that stretch reads PSLPSERYRTSGAPPESNPGDVKGEGTR. N-linked (GlcNAc...) asparagine glycans are attached at residues Asn-752 and Asn-778. The segment at 915-934 is disordered; it reads GDGPRSETKEFTTPEGVPSA. Residues 916–926 are compositionally biased toward basic and acidic residues; it reads DGPRSETKEFT. N-linked (GlcNAc...) asparagine glycans are attached at residues Asn-973 and Asn-988. Disordered stretches follow at residues 1011–1040 and 1090–1111; these read TQVG…PTLP and TTAA…TKIH. Over residues 1024 to 1040 the composition is skewed to pro residues; the sequence is PAPPNEATPTAAPPTLP. Residues 1090-1105 show a composition bias toward low complexity; that stretch reads TTAAATTTTESPPTTT. Residues 1114–1206 form the Fibronectin type-III 5 domain; it reads APDEQSIWNV…ITFMTSTAYT (93 aa). Residues 1218–1238 traverse the membrane as a helical segment; the sequence is FIGLMCAIALLVLILLIVCFI. The Cytoplasmic segment spans residues 1239–1347; that stretch reads KRSRGGKYPV…SPVNAIYSLA (109 aa). Residues 1248-1347 form a disordered region; it reads VREKKDVPLG…SPVNAIYSLA (100 aa). Positions 1261-1272 are enriched in acidic residues; that stretch reads PKEEDGSFDYSD. Phosphoserine is present on residues Ser-1267, Ser-1281, Ser-1294, Ser-1297, Ser-1333, Ser-1334, and Ser-1338. A compositionally biased stretch (polar residues) spans 1278 to 1291; the sequence is LQGSQTSLDGTIKQ.

It belongs to the immunoglobulin superfamily. L1/neurofascin/NgCAM family. As to quaternary structure, horseshoe-shaped homodimer. Probable constituent of a NFASC/NRCAM/ankyrin-G complex. Associates with the sodium channel beta-1 (SCN1B) and beta-3 (SCN3B) subunits. Interacts with GLDN/gliomedin. Interacts with MYOC.

Its subcellular location is the cell membrane. The protein localises to the cell junction. The protein resides in the paranodal septate junction. Cell adhesion, ankyrin-binding protein which may be involved in neurite extension, axonal guidance, synaptogenesis, myelination and neuron-glial cell interactions. The protein is Neurofascin (NFASC) of Homo sapiens (Human).